Reading from the N-terminus, the 358-residue chain is S-adenosylmethionine:tRNA ribosyltransferase-isomerase (358 aa).

This sequence belongs to the QueA family. As to quaternary structure, monomer.

It is found in the cytoplasm. It carries out the reaction 7-aminomethyl-7-carbaguanosine(34) in tRNA + S-adenosyl-L-methionine = epoxyqueuosine(34) in tRNA + adenine + L-methionine + 2 H(+). It participates in tRNA modification; tRNA-queuosine biosynthesis. Functionally, transfers and isomerizes the ribose moiety from AdoMet to the 7-aminomethyl group of 7-deazaguanine (preQ1-tRNA) to give epoxyqueuosine (oQ-tRNA). This is S-adenosylmethionine:tRNA ribosyltransferase-isomerase from Rhodopseudomonas palustris (strain BisA53).